An 827-amino-acid polypeptide reads, in one-letter code: Transcription factor SOX-6 (827 aa).

Polar residues predominate over residues 1-10 (MSSKQATSPF). Residues 1 to 51 (MSSKQATSPFACTADGEEAMTQDLTSREKEEGSDQHPASHLPLHPIMHNKP) are disordered. Positions 25–34 (TSREKEEGSD) are enriched in basic and acidic residues. At T119 the chain carries Phosphothreonine. Residues 184 to 262 (LAEKERQLST…LLQQQIQVQG (79 aa)) are a coiled coil. Disordered stretches follow at residues 334 to 361 (QINP…GHSY) and 379 to 470 (VSPG…PIGG). A compositionally biased stretch (basic and acidic residues) spans 341 to 357 (GISDRFGRNLDPSEHGG). Residue S399 is modified to Phosphoserine. A Phosphothreonine modification is found at T401. Residues K404 and K417 each participate in a glycyl lysine isopeptide (Lys-Gly) (interchain with G-Cter in SUMO) cross-link. 2 stretches are compositionally biased toward polar residues: residues 421-431 (TAQPLNLSSRP) and 439-461 (SPTS…LPNK). S439 and S442 each carry phosphoserine. The segment at residues 620-688 (IKRPMNAFMV…IHLEKYPNYK (69 aa)) is a DNA-binding region (HMG box). Disordered regions lie at residues 752–772 (TPSP…EPSL) and 786–827 (ASLA…VSAN). Residues 795–808 (NGEDEMEAYDDYED) are compositionally biased toward acidic residues.

As to quaternary structure, homodimer. Interacts with DAZAP2. May interact with CENPK. Post-translationally, sumoylation inhibits the transcriptional activity. Highly expressed in testis.

The protein localises to the nucleus. It localises to the cytoplasm. Its function is as follows. Transcription factor that plays a key role in several developmental processes, including neurogenesis, chondrocytes differentiation and cartilage formation. Specifically binds the 5'-AACAAT-3' DNA motif present in enhancers and super-enhancers and promotes expression of genes important for chondrogenesis. Required for overt chondrogenesis when condensed prechondrocytes differentiate into early stage chondrocytes: SOX5 and SOX6 cooperatively bind with SOX9 on active enhancers and super-enhancers associated with cartilage-specific genes, and thereby potentiate SOX9's ability to transactivate. Not involved in precartilaginous condensation, the first step in chondrogenesis, during which skeletal progenitors differentiate into prechondrocytes. Together with SOX5, required to form and maintain a pool of highly proliferating chondroblasts between epiphyses and metaphyses, to form columnar chondroblasts, delay chondrocyte prehypertrophy but promote hypertrophy, and to delay terminal differentiation of chondrocytes on contact with ossification fronts. Binds to the proximal promoter region of the myelin protein MPZ gene, and is thereby involved in the differentiation of oligodendroglia in the developing spinal tube. Binds to the gene promoter of MBP and acts as a transcriptional repressor. The polypeptide is Transcription factor SOX-6 (Mus musculus (Mouse)).